Reading from the N-terminus, the 495-residue chain is Alkaline protease 2 (495 aa).

The first 16 residues, 1–16 (MKGYLSLSILPLLVAA), serve as a signal peptide directing secretion. A propeptide spanning residues 17-136 (SPVVVDSIHN…IEKDSEVHTM (120 aa)) is cleaved from the precursor. The 94-residue stretch at 43–136 (SYIVVFKKHV…IEKDSEVHTM (94 aa)) folds into the Inhibitor I9 domain. The region spanning 146 to 452 (PWGLARISHR…GGSSNYTDII (307 aa)) is the Peptidase S8 domain. Active-site charge relay system residues include Asp182 and His214. The N-linked (GlcNAc...) asparagine glycan is linked to Asn284. Residue Ser380 is the Charge relay system of the active site. Asn447 and Asn460 each carry an N-linked (GlcNAc...) asparagine glycan.

This sequence belongs to the peptidase S8 family.

The catalysed reaction is Hydrolysis of proteins with broad specificity, and of Bz-Arg-OEt &gt; Ac-Tyr-OEt. Does not hydrolyze peptide amides.. Functionally, alkaline protease that allows assimilation of proteinaceous substrates. Acts as a significant virulence factor in invasive aspergillosis. Required for regular sporulation. This is Alkaline protease 2 (alp2) from Aspergillus fumigatus (strain CBS 144.89 / FGSC A1163 / CEA10) (Neosartorya fumigata).